The primary structure comprises 197 residues: Xanthine phosphoribosyltransferase (197 aa).

Leu20 and Thr27 together coordinate xanthine. Ala128–Ala132 is a 5-phospho-alpha-D-ribose 1-diphosphate binding site. Lys156 provides a ligand contact to xanthine.

Belongs to the purine/pyrimidine phosphoribosyltransferase family. Xpt subfamily. As to quaternary structure, homodimer.

It localises to the cytoplasm. It carries out the reaction XMP + diphosphate = xanthine + 5-phospho-alpha-D-ribose 1-diphosphate. It participates in purine metabolism; XMP biosynthesis via salvage pathway; XMP from xanthine: step 1/1. Functionally, converts the preformed base xanthine, a product of nucleic acid breakdown, to xanthosine 5'-monophosphate (XMP), so it can be reused for RNA or DNA synthesis. The sequence is that of Xanthine phosphoribosyltransferase from Lactococcus lactis subsp. lactis (strain IL1403) (Streptococcus lactis).